We begin with the raw amino-acid sequence, 404 residues long: Argininosuccinate synthase (404 aa).

Residues 13-21 (AYSGGLDTS) and A41 contribute to the ATP site. L-citrulline-binding residues include Y93 and S98. G123 contributes to the ATP binding site. Residues T125, N129, and D130 each coordinate L-aspartate. L-citrulline is bound at residue N129. The L-citrulline site is built by R133, S182, S191, E267, and Y279.

Belongs to the argininosuccinate synthase family. Type 1 subfamily. In terms of assembly, homotetramer.

The protein localises to the cytoplasm. It carries out the reaction L-citrulline + L-aspartate + ATP = 2-(N(omega)-L-arginino)succinate + AMP + diphosphate + H(+). It participates in amino-acid biosynthesis; L-arginine biosynthesis; L-arginine from L-ornithine and carbamoyl phosphate: step 2/3. This chain is Argininosuccinate synthase, found in Moritella profunda.